The following is a 573-amino-acid chain: SHC-transforming protein 2 (573 aa).

One can recognise a PID domain in the interval 125-307; sequence LGPGVSYIVR…TGLEESAWGD (183 aa). An SH2 domain is found at 478–569; it reads WYHGRMSRRA…ESELHLRGVV (92 aa).

Interacts with the Trk receptors in a phosphotyrosine-dependent manner and MEGF12. Once activated, binds to GRB2. In terms of processing, phosphorylated on tyrosine by the Trk receptors.

In terms of biological role, signaling adapter that couples activated growth factor receptors to signaling pathway in neurons. Involved in the signal transduction pathways of neurotrophin-activated Trk receptors in cortical neurons. The chain is SHC-transforming protein 2 (Shc2) from Rattus norvegicus (Rat).